The following is a 4749-amino-acid chain: E3 ubiquitin-protein ligase MYCBP2 (4749 aa).

Disordered regions lie at residues 87–127 (DRDQ…RSKS), 170–192 (AASK…SREP), and 609–628 (ASKG…KPYK). Positions 100 to 124 (SRNKKILNKKKLKRKQKSKSKVKTR) are enriched in basic residues. 4 positions are modified to phosphoserine: S127, S178, S181, and S183. RCC1 repeat units lie at residues 600 to 655 (DGSV…VISK), 699 to 755 (NGEV…MMCP), 907 to 957 (KRDK…VLME), 958 to 1009 (NGDV…LLMD), and 1011 to 1066 (QVFT…LRID). A compositionally biased stretch (basic residues) spans 899-910 (SHPAQLKHKRDK). The tract at residues 899 to 928 (SHPAQLKHKRDKHKDGSGDRGEKDASKITT) is disordered. Residues 911–924 (HKDGSGDRGEKDAS) are compositionally biased toward basic and acidic residues. The interval 1235–1386 (NRFESHGGGW…GQIPQLLYRL (152 aa)) is PHR domain 1. Residue S1621 is modified to Phosphoserine. The tract at residues 1723 to 1881 (NRFTKTSQGR…GQIPQILYYR (159 aa)) is PHR domain 2. A disulfide bridge links C1745 with C1860. Positions 2018 to 2544 (AVIESEHPYK…FNQHLGKSLL (527 aa)) are RAE1 binding. Disordered stretches follow at residues 2313–2336 (KKTS…SAAA) and 2780–3084 (QQRQ…KGDG). The stretch at 2331-2438 (SPSAAASSAD…IDAGLEVKVK (108 aa)) is one Filamin repeat. Residues 2780 to 2803 (QQRQLQSDRGTISTSSRPVSTSGK) show a composition bias toward polar residues. Basic and acidic residues predominate over residues 2814-2832 (VKPDGHVSRTPADQKKPRG). Position 2841 is a phosphoserine (S2841). Over residues 2847–2857 (DAAKLRSDSHS) the composition is skewed to basic and acidic residues. The span at 2858–2879 (RSLSPNHNTLQTLKSDGRTSSG) shows a compositional bias: polar residues. A phosphoserine mark is found at S2859 and S2861. 2 stretches are compositionally biased toward low complexity: residues 2884 to 2894 (SPGPGSRSSSP) and 2904 to 2917 (SSPS…SSSP). A phosphoserine mark is found at S2905 and S2911. A compositionally biased stretch (polar residues) spans 2918–2929 (QDKNLPQKSTAP). A compositionally biased stretch (basic and acidic residues) spans 2932–2943 (TKLDPPRERSKS). 3 positions are modified to phosphoserine: S2941, S2943, and S2992. Residues 3008–3021 (CTSSTLKTNGVTDS) show a composition bias toward polar residues. Composition is skewed to basic and acidic residues over residues 3027 to 3037 (GDLKSVDEGSN) and 3047 to 3056 (PLKDEQEMRA). S3057 carries the phosphoserine modification. The segment covering 3060–3073 (ISRKCANRHTRPKK) has biased composition (basic residues). A phosphoserine mark is found at S3162, S3550, and S3577. The disordered stretch occupies residues 3677–3700 (VEAEEDEDEDNKSNKENAEQEKDT). The segment covering 3687 to 3700 (NKSNKENAEQEKDT) has biased composition (basic and acidic residues). Residues 3789–3967 (FSISVQSGFE…SVAQQRSCEA (179 aa)) form the DOC domain. Positions 3986–4007 (SGDAEPTPEQEEKALLSSPEGE) are disordered. T3992 is modified (phosphothreonine). A phosphoserine mark is found at S4002 and S4003. Residues C4499, C4502, C4517, H4519, H4522, C4525, C4546, C4549, C4615, and C4618 each contribute to the Zn(2+) site. Residues 4499-4550 (CMICFTEALSAAPAIQLDCSHVFHLQCCRRVLENRWLGPRITFGFISCPICK) form an RING-type; atypical zinc finger. Residues 4610–4747 (YAYYVCYKCR…LGCGVCRNAH (138 aa)) are tandem cysteine domain. C4629 is a catalytic residue. Residues C4646, C4649, C4658, H4661, C4670, C4673, and C4674 each contribute to the Zn(2+) site. Residue C4681 is part of the active site. Zn(2+) is bound by residues C4688, C4691, C4709, C4723, H4729, C4740, and C4743.

Belongs to the RING-Cys relay (RCR) family. Interacts with MYC. Interacts with TSC2 (tuberin) when TSC2 is in complex with TSC1 (hamartin). Interacts with FBXO45. Interacts with RAE1. Interacts with CPNE1 (via VWFA domain) and CPNE4 (via VWFA domain). Interacts with (sumoylated) RANGAP1; interaction with sumoylated RANGAP1 inhibits E3 ubiquitin-protein ligase activity and promotes MYCBP2 translocation to the nucleus. Interacts with RAN. Interacts with ATP13A2; the interaction inhibits the ubiquitination of TSC2 by MYCBP2. Interacts with USP11. Post-translationally, autoubiquitinated. Expression is mostly restricted to the nervous system, including expression in motor and sensory axons. During postnatal development, expression is particularly strong in the cerebellum, hippocampus and retina. Lower levels of expression are observed throughout the cerebral cortex.

It is found in the nucleus. The protein resides in the cell projection. The protein localises to the axon. Its subcellular location is the cytoplasm. It localises to the cytoskeleton. The enzyme catalyses [E2 ubiquitin-conjugating enzyme]-S-ubiquitinyl-L-cysteine + [acceptor protein]-L-threonine = [E2 ubiquitin-conjugating enzyme]-L-cysteine + [acceptor protein]-3-O-ubiquitinyl-L-threonine.. It participates in protein modification; protein ubiquitination. In terms of biological role, atypical E3 ubiquitin-protein ligase which specifically mediates ubiquitination of threonine and serine residues on target proteins, instead of ubiquitinating lysine residues. Shows esterification activity towards both threonine and serine, with a preference for threonine, and acts via two essential catalytic cysteine residues that relay ubiquitin to its substrate via thioester intermediates. Interacts with the E2 enzymes UBE2D1, UBE2D3, UBE2E1 and UBE2L3. Plays a key role in neural development, probably by mediating ubiquitination of threonine residues on target proteins. Involved in different processes such as regulation of neurite outgrowth, synaptic growth, synaptogenesis and axon degeneration. Required for the formation of major central nervous system axon tracts. Required for proper axon growth by regulating axon navigation and axon branching: acts by regulating the subcellular location and stability of MAP3K12/DLK. Required for proper localization of retinogeniculate projections but not for eye-specific segregation. Regulates axon guidance in the olfactory system. Involved in Wallerian axon degeneration, an evolutionarily conserved process that drives the loss of damaged axons: acts by promoting destabilization of NMNAT2, probably via ubiquitination of NMNAT2. Catalyzes ubiquitination of threonine and/or serine residues on NMNAT2, consequences of threonine and/or serine ubiquitination are however unknown. Regulates the internalization of TRPV1 in peripheral sensory neurons. May mediate ubiquitination and subsequent proteasomal degradation of TSC2/tuberin. Independently of the E3 ubiquitin-protein ligase activity, also acts as a guanosine exchange factor (GEF) for RAN in neurons of dorsal root ganglia. May function as a facilitator or regulator of transcriptional activation by MYC. Acts in concert with HUWE1 to regulate the circadian clock gene expression by promoting the lithium-induced ubiquination and degradation of NR1D1. The polypeptide is E3 ubiquitin-protein ligase MYCBP2 (Mus musculus (Mouse)).